Here is a 594-residue protein sequence, read N- to C-terminus: Zinc finger protein 37 (594 aa).

Residues 1 to 253 form a disordered region; the sequence is MATSEPAESD…KPEKAPGSGK (253 aa). Thr-3 carries the phosphothreonine modification. One can recognise a KRAB domain in the interval 3-74; it reads TSEPAESDAV…GKKASPSSLK (72 aa). Residue Ser-9 is modified to Phosphoserine. The segment covering 10 to 33 has biased composition (basic and acidic residues); sequence DAVRAKEWEQLEPVQRDVYKDTKL. Positions 34–46 are enriched in polar residues; the sequence is ENCSNPASMGNQD. The span at 89–111 shows a compositional bias: basic and acidic residues; sequence QQDDEHREEKQKSQSKLTKEVTL. Over residues 145 to 158 the composition is skewed to polar residues; sequence KSSSRGKNSNQNSD. Basic and acidic residues-rich tracts occupy residues 159–172 and 181–234; these read SLKK…DHRK and VNKD…TGEK. 12 consecutive C2H2-type zinc fingers follow at residues 255-277, 283-305, 311-324, 339-361, 367-389, 395-417, 423-445, 451-473, 479-501, 507-529, 535-557, and 563-585; these read YECN…QRTH, YECE…GHKH, YKCN…LRSH, YECK…VRTH, YECN…MRIH, FECN…QRTH, YKCD…MRTH, FECN…QRVH, YECV…QRTH, FECY…QRSH, and YECI…MKIH.

The protein belongs to the krueppel C2H2-type zinc-finger protein family. In terms of tissue distribution, expressed in testis and brain.

The protein localises to the nucleus. Functionally, may have a role in regulating spermiogenesis. The protein is Zinc finger protein 37 (Zfp37) of Mus musculus (Mouse).